The sequence spans 95 residues: Small ribosomal subunit protein bS6 (95 aa).

The protein belongs to the bacterial ribosomal protein bS6 family.

Binds together with bS18 to 16S ribosomal RNA. This chain is Small ribosomal subunit protein bS6, found in Clostridium acetobutylicum (strain ATCC 824 / DSM 792 / JCM 1419 / IAM 19013 / LMG 5710 / NBRC 13948 / NRRL B-527 / VKM B-1787 / 2291 / W).